A 208-amino-acid polypeptide reads, in one-letter code: Small ribosomal subunit protein eS8 (208 aa).

The disordered stretch occupies residues 1 to 27 (MGISRDNWHKRRKTGGKRKPYHKKRKY). Residue Gly-2 is the site of N-myristoyl glycine attachment. Basic residues predominate over residues 8 to 26 (WHKRRKTGGKRKPYHKKRK). N6-acetyllysine is present on residues Lys-37 and Lys-128. Position 130 is a phosphothreonine (Thr-130). The residue at position 160 (Ser-160) is a Phosphoserine. Residues Lys-170 and Lys-193 each participate in a glycyl lysine isopeptide (Lys-Gly) (interchain with G-Cter in SUMO2) cross-link.

This sequence belongs to the eukaryotic ribosomal protein eS8 family. Component of the small ribosomal subunit. Identified in a IGF2BP1-dependent mRNP granule complex containing untranslated mRNAs. Part of the small subunit (SSU) processome, composed of more than 70 proteins and the RNA chaperone small nucleolar RNA (snoRNA) U3.

It localises to the cytoplasm. The protein localises to the membrane. The protein resides in the nucleus. It is found in the nucleolus. Functionally, component of the small ribosomal subunit. The ribosome is a large ribonucleoprotein complex responsible for the synthesis of proteins in the cell. Part of the small subunit (SSU) processome, first precursor of the small eukaryotic ribosomal subunit. During the assembly of the SSU processome in the nucleolus, many ribosome biogenesis factors, an RNA chaperone and ribosomal proteins associate with the nascent pre-rRNA and work in concert to generate RNA folding, modifications, rearrangements and cleavage as well as targeted degradation of pre-ribosomal RNA by the RNA exosome. In Oryctolagus cuniculus (Rabbit), this protein is Small ribosomal subunit protein eS8 (RPS8).